We begin with the raw amino-acid sequence, 362 residues long: MKKSLELKLQQMLERYEEVGRLLSEASIIADQNQFKSLSKEYAQLEPVSQCYESYLEAKNNLDSLNELLESDDKDLATMAEEEIDIVKKQIEELDEQLQWHLIPKDPDDERNIYLEVRAGTGGDEAAIFAGDLFRMYSRYAESQGWQIELISASHGEHGGYKEIIAKISGQAVYSQLKFESGAHRVQRVPETESQGRVHTSACTVAIMPEVDEINDIQINPDDLRIDTYRSSGAGGQHVNKTDSAIRITHIPTGVVVECQDERSQHKNRAKAMSLLKTRLLDAEVSKQKQEQAQTRKSLVGTGDRSERIRTYNFPQGRLTDHRINLTIYQLSDIMEGNLSLVIDPLKREYHAELLADLGRHD.

Residue glutamine 237 is modified to N5-methylglutamine.

Belongs to the prokaryotic/mitochondrial release factor family. Methylated by PrmC. Methylation increases the termination efficiency of RF1.

The protein localises to the cytoplasm. In terms of biological role, peptide chain release factor 1 directs the termination of translation in response to the peptide chain termination codons UAG and UAA. This is Peptide chain release factor 1 from Legionella pneumophila (strain Corby).